The following is a 97-amino-acid chain: Putative septation protein SpoVG (97 aa).

Belongs to the SpoVG family.

In terms of biological role, essential for sporulation. Interferes with or is a negative regulator of the pathway leading to asymmetric septation. The chain is Putative septation protein SpoVG from Bacillus cereus (strain 03BB102).